The primary structure comprises 2147 residues: Probable serine/threonine-protein kinase roco6 (2147 aa).

The Extracellular portion of the chain corresponds to 1–1055 (MNSIHKQHYT…LDHSRVEFNR (1055 aa)). 11 LRR repeats span residues 69-89 (DMKYLDLSKRMIYSLELMMIP), 101-122 (SISILNLNDNLLGEIPESLKQL), 124-145 (QLISLSIRGNHILEIPLWFPEE), 148-169 (LLRKLDVSHNAISSVPNTFNKF), 171-192 (ILEDLNLSNNYISYIHPSLFPE), 193-214 (GIMRLNLSNNLFREVELPPWFE), 215-236 (SLLTLDISGNKLKHLGNLPFHL), 237-256 (VRVSIDDNHLESIDHKVILR), 306-328 (HLTHLDLSGNCISVLPPELANLT), 329-350 (ELVRLDLSFNILTTLPLYIVSY), and 352-372 (RLEHLDLQGTLDTLVSPPRRI). Residues 390 to 750 (QGEPSYRVKL…DLLKKTVVEL (361 aa)) form the Roc domain. Positions 390-750 (QGEPSYRVKL…DLLKKTVVEL (361 aa)) are small GTPase-like. 403 to 410 (GQENVGKT) contacts GTP. 2 disordered regions span residues 491-582 (NSNG…VGTN) and 602-621 (SNLSIGGSNGNNNNNSGGSG). Composition is skewed to low complexity over residues 492 to 512 (SNGVNSNSQININSSSGNIHS), 519 to 531 (NVNSSGGIHSNNS), 539 to 568 (NSFLNNTNSNGTNNNSSNLNINTNSNNVNS), and 602 to 617 (SNLSIGGSNGNNNNNS). GTP-binding positions include 634 to 638 (DCAGQ) and 691 to 694 (THLD). The COR domain maps to 758 to 892 (PELYLKLEKL…RFELMFPLDS (135 aa)). 2 stretches are compositionally biased toward low complexity: residues 905 to 941 (GNSYVNNNNNNNNNSNNNNNGSNKSSPFKTTPSSPST) and 960 to 977 (SGNNSSSKNSTSTKRSIS). The segment at 905–995 (GNSYVNNNNN…NSDLDLIGGG (91 aa)) is disordered. The WD 1 repeat unit spans residues 1051 to 1098 (VEFNRWIQLSFAPAGLFSRLLIRLLISKEFDMKPILYWRNGVVVESQS). The helical transmembrane segment at 1056–1076 (WIQLSFAPAGLFSRLLIRLLI) threads the bilayer. Residues 1077–2147 (SKEFDMKPIL…CGTNNVCIWS (1071 aa)) are Cytoplasmic-facing. LRR repeat units lie at residues 1237–1263 (ILSIKPASFGNNQIQFEVRVPPSPPPP), 1274–1297 (DDNITTTTLAVNNIKVLESGGSQP), and 1325–1348 (ESSLIQVEFDHNNQTLVISGTYKY). Positions 1356–1627 (FESPKLIGRG…KIVKRIKQII (272 aa)) constitute a Protein kinase domain. Residues 1362 to 1370 (IGRGASGKI) and Lys1383 each bind ATP. Asp1481 functions as the Proton acceptor in the catalytic mechanism. A disordered region spans residues 1653 to 1699 (ADSQPFHYHQQQQPSLNSTNQLQQQQYSSVLTSPRSNLSDSSNSSQN). Positions 1662–1699 (QQQQPSLNSTNQLQQQQYSSVLTSPRSNLSDSSNSSQN) are enriched in low complexity. WD repeat units follow at residues 1735–1774 (QPEAKVNQLVWEVNSRRVWGGCESGEIIVWNAENGNQIFR) and 1778–1820 (LHPG…LDDQ). The PH domain maps to 1821-1923 (SGTKSDFITK…WLTAINRVIN (103 aa)). A WD 4 repeat occupies 2031–2068 (HYSKPITSMALVEKNVWISCEDESLSVWDGDTGSFIRK).

This sequence belongs to the protein kinase superfamily. TKL Ser/Thr protein kinase family. ROCO subfamily.

Its subcellular location is the membrane. The catalysed reaction is L-seryl-[protein] + ATP = O-phospho-L-seryl-[protein] + ADP + H(+). The enzyme catalyses L-threonyl-[protein] + ATP = O-phospho-L-threonyl-[protein] + ADP + H(+). Its function is as follows. May act as a serine/threonine-protein kinase and guanine-nucleotide releasing factor. The sequence is that of Probable serine/threonine-protein kinase roco6 (roco6) from Dictyostelium discoideum (Social amoeba).